Reading from the N-terminus, the 499-residue chain is UDP-N-acetylmuramoylalanine--D-glutamate ligase (499 aa).

128–134 (GTNGKTT) lines the ATP pocket.

Belongs to the MurCDEF family.

The protein localises to the cytoplasm. The catalysed reaction is UDP-N-acetyl-alpha-D-muramoyl-L-alanine + D-glutamate + ATP = UDP-N-acetyl-alpha-D-muramoyl-L-alanyl-D-glutamate + ADP + phosphate + H(+). It participates in cell wall biogenesis; peptidoglycan biosynthesis. In terms of biological role, cell wall formation. Catalyzes the addition of glutamate to the nucleotide precursor UDP-N-acetylmuramoyl-L-alanine (UMA). The polypeptide is UDP-N-acetylmuramoylalanine--D-glutamate ligase (Rhodococcus jostii (strain RHA1)).